The following is a 104-amino-acid chain: Small ribosomal subunit protein uS10 (104 aa).

This sequence belongs to the universal ribosomal protein uS10 family. In terms of assembly, part of the 30S ribosomal subunit.

Involved in the binding of tRNA to the ribosomes. The protein is Small ribosomal subunit protein uS10 of Buchnera aphidicola subsp. Baizongia pistaciae (strain Bp).